Consider the following 382-residue polypeptide: ATP phosphoribosyltransferase regulatory subunit (382 aa).

It belongs to the class-II aminoacyl-tRNA synthetase family. HisZ subfamily. In terms of assembly, heteromultimer composed of HisG and HisZ subunits.

Its subcellular location is the cytoplasm. The protein operates within amino-acid biosynthesis; L-histidine biosynthesis; L-histidine from 5-phospho-alpha-D-ribose 1-diphosphate: step 1/9. Its function is as follows. Required for the first step of histidine biosynthesis. May allow the feedback regulation of ATP phosphoribosyltransferase activity by histidine. The sequence is that of ATP phosphoribosyltransferase regulatory subunit from Acidovorax sp. (strain JS42).